Reading from the N-terminus, the 268-residue chain is Ribosomal RNA small subunit methyltransferase A (268 aa).

Positions 23, 25, 50, 72, 97, and 116 each coordinate S-adenosyl-L-methionine.

This sequence belongs to the class I-like SAM-binding methyltransferase superfamily. rRNA adenine N(6)-methyltransferase family. RsmA subfamily.

It localises to the cytoplasm. The enzyme catalyses adenosine(1518)/adenosine(1519) in 16S rRNA + 4 S-adenosyl-L-methionine = N(6)-dimethyladenosine(1518)/N(6)-dimethyladenosine(1519) in 16S rRNA + 4 S-adenosyl-L-homocysteine + 4 H(+). Its function is as follows. Specifically dimethylates two adjacent adenosines (A1518 and A1519) in the loop of a conserved hairpin near the 3'-end of 16S rRNA in the 30S particle. May play a critical role in biogenesis of 30S subunits. The sequence is that of Ribosomal RNA small subunit methyltransferase A from Rickettsia bellii (strain OSU 85-389).